The following is an 889-amino-acid chain: DNA mismatch repair protein MutS (889 aa).

ATP is bound at residue 641–648 (GPNMAGKS).

Belongs to the DNA mismatch repair MutS family.

Its function is as follows. This protein is involved in the repair of mismatches in DNA. It is possible that it carries out the mismatch recognition step. This protein has a weak ATPase activity. The chain is DNA mismatch repair protein MutS from Orientia tsutsugamushi (strain Boryong) (Rickettsia tsutsugamushi).